The primary structure comprises 47 residues: Potassium channel toxin gamma-KTx 5.2 (47 aa).

4 cysteine pairs are disulfide-bonded: Cys-5–Cys-23, Cys-11–Cys-34, Cys-20–Cys-39, and Cys-24–Cys-41.

It belongs to the ergtoxin family. Gamma-KTx 5 subfamily. Expressed by the venom gland.

It localises to the secreted. In terms of biological role, reversibly blocks Kv11/ERG potassium channels. The protein is Potassium channel toxin gamma-KTx 5.2 of Centruroides gracilis (Slenderbrown scorpion).